The primary structure comprises 171 residues: Putative F-box protein At1g32020 (171 aa).

The F-box domain maps to 3 to 49; it reads CDRISTLPDHLVAKIVSYLGIKDSIKTSVLSKRWEFVWLKVVGLDLK.

This Arabidopsis thaliana (Mouse-ear cress) protein is Putative F-box protein At1g32020.